We begin with the raw amino-acid sequence, 414 residues long: Transcriptional repressor protein YY1 (414 aa).

The interval 1–170 (MASGDTLYIA…GGGSSSSGGG (170 aa)) is interaction with the SMAD1/SMAD4 complex. Residues 33-81 (VETIETTVVGEEEEEDDDDEDGGGGDHGGGGGHGHAGHHHHHHHHHHHP) form a disordered region. Residues 42-55 (GEEEEEDDDDEDGG) are compositionally biased toward acidic residues. The segment covering 57–66 (GDHGGGGGHG) has biased composition (gly residues). A compositionally biased stretch (basic residues) spans 67–81 (HAGHHHHHHHHHHHP). Residues 116–260 (DDSDGLRAED…YSEYMTGKKL (145 aa)) are gly-rich region involved in interaction with HCFC1. Ser118 is subject to Phosphoserine; by CK2. Positions 157–203 (GKSGGGGSSSSGGGRVKKGGGKKSGKKSYLSGGAGAAGGGGADPGNK) are disordered. A compositionally biased stretch (gly residues) spans 158–170 (KSGGGGSSSSGGG). Positions 171-182 (RVKKGGGKKSGK) are enriched in basic residues. Glycyl lysine isopeptide (Lys-Gly) (interchain with G-Cter in SUMO2) cross-links involve residues Lys182 and Lys183. Ser187 bears the Phosphoserine mark. Residues 188 to 199 (GGAGAAGGGGAD) are compositionally biased toward gly residues. Residues Lys208 and Lys230 each participate in a glycyl lysine isopeptide (Lys-Gly) (interchain with G-Cter in SUMO2) cross-link. Ser247 is modified (phosphoserine). An involved in nuclear matrix association region spans residues 257 to 341 (GKKLPPGGIP…KAFVESSKLK (85 aa)). Residues Lys286 and Lys288 each participate in a glycyl lysine isopeptide (Lys-Gly) (interchain with G-Cter in SUMO2) cross-link. The binding to DNA stretch occupies residues 295-414 (TIACPHKGCT…LTHAKAKNNQ (120 aa)). 3 C2H2-type zinc fingers span residues 296–320 (IACP…LHTH), 325–347 (HVCA…QLVH), and 353–377 (FQCT…VRIH). The Zn(2+) site is built by Cys298, Cys303, His316, His320, Cys327, Cys330, His343, His347, Cys355, Cys360, His373, and His377. The interval 333-371 (AFVESSKLKRHQLVHTGEKPFQCTFEGCGKRFSLDFNLR) is involved in repression of activated transcription. An involved in masking transactivation domain region spans residues 371 to 397 (RTHVRIHTGDRPYVCPFDGCNKKFAQS). At Thr378 the chain carries Phosphothreonine. A C2H2-type 4 zinc finger spans residues 383-407 (YVCPFDGCNKKFAQSTNLKSHILTH). Positions 385, 390, 403, and 407 each coordinate Zn(2+). Residues Lys409 and Lys411 each participate in a glycyl lysine isopeptide (Lys-Gly) (interchain with G-Cter in SUMO2) cross-link.

This sequence belongs to the YY transcription factor family. As to quaternary structure, interacts with YAF2 through the region encompassing the first and second zinc fingers. Component of the chromatin remodeling INO80 complex; specifically part of a complex module associated with the DBINO domain of INO80. Interacts with EED and EZH2; the interactions are indicative for an association with the PRC2/EED-EZH2 complex. Interacts with SFMBT2. Found in a complex with SMAD1 and SMAD4. Found in a complex with YY1, SIN3A and HDAC1. Accessory component of the polycomb repressive deubiquitinase (PR-DUB) complex, at least composed of BAP1, one of ASXL1, ASXL2 or (probably) ASXL3 and one of MBD5 or MBD6; the PR-DUB core associates with a number of accessory proteins, including FOXK1, FOXK2, KDM1B, HCFC1, YY1 and OGT. Interacts (via Gly-rich region) with HCFC1; the interaction is direct. Interacts (via C-terminal zinc-finger domains) with BAP1 (via ULD domain); the interaction is direct and requires HCFC1. Post-translationally, phosphorylation at Ser-118 by CK2 prevents proteolytic cleavage by caspase-7 (CASP7) during apoptosis. In terms of processing, proteolytically cleaved by caspase-7 (CASP7) in response to apoptosis. Phosphorylation at Ser-118 protects against proteolytic cleavage. Transiently poly-ADP-ribosylated by PARP1 upon DNA damage, with the effect of decreasing affinity of YY1 to its cognate DNA binding sites. Post-translationally, ubiquitinated.

It is found in the nucleus matrix. Its function is as follows. Multifunctional transcription factor that exhibits positive and negative control on a large number of cellular and viral genes by binding to sites overlapping the transcription start site. Binds to the consensus sequence 5'-CCGCCATNTT-3'; some genes have been shown to contain a longer binding motif allowing enhanced binding; the initial CG dinucleotide can be methylated greatly reducing the binding affinity. The effect on transcription regulation is depending upon the context in which it binds and diverse mechanisms of action include direct activation or repression, indirect activation or repression via cofactor recruitment, or activation or repression by disruption of binding sites or conformational DNA changes. Its activity is regulated by transcription factors and cytoplasmic proteins that have been shown to abrogate or completely inhibit YY1-mediated activation or repression. For example, it acts as a repressor in absence of adenovirus E1A protein but as an activator in its presence. Acts synergistically with the SMAD1 and SMAD4 in bone morphogenetic protein (BMP)-mediated cardiac-specific gene expression. Binds to SMAD binding elements (SBEs) (5'-GTCT/AGAC-3') within BMP response element (BMPRE) of cardiac activating regions. May play an important role in development and differentiation. Proposed to recruit the PRC2/EED-EZH2 complex to target genes that are transcriptional repressed. Involved in DNA repair. In vitro, binds to DNA recombination intermediate structures (Holliday junctions). Plays a role in regulating enhancer activation. Recruits the PR-DUB complex to specific gene-regulatory regions. In terms of biological role, proposed core component of the chromatin remodeling INO80 complex which is involved in transcriptional regulation, DNA replication and probably DNA repair; proposed to target the INO80 complex to YY1-responsive elements. This Homo sapiens (Human) protein is Transcriptional repressor protein YY1 (YY1).